The chain runs to 302 residues: Dihydroorotate dehydrogenase B (NAD(+)), catalytic subunit (302 aa).

FMN contacts are provided by residues serine 23 and 47–48 (KS). Residues lysine 47, 71–75 (NAMGL), and asparagine 125 contribute to the substrate site. Asparagine 125 lines the FMN pocket. The active-site Nucleophile is cysteine 128. FMN contacts are provided by lysine 163 and isoleucine 189. 190–191 (NT) is a substrate binding site. Residues glycine 215, 241–242 (GG), and 263–264 (GT) contribute to the FMN site.

Belongs to the dihydroorotate dehydrogenase family. Type 1 subfamily. Heterotetramer of 2 PyrK and 2 PyrD type B subunits. FMN is required as a cofactor.

The protein resides in the cytoplasm. It carries out the reaction (S)-dihydroorotate + NAD(+) = orotate + NADH + H(+). It functions in the pathway pyrimidine metabolism; UMP biosynthesis via de novo pathway; orotate from (S)-dihydroorotate (NAD(+) route): step 1/1. Functionally, catalyzes the conversion of dihydroorotate to orotate with NAD(+) as electron acceptor. The sequence is that of Dihydroorotate dehydrogenase B (NAD(+)), catalytic subunit (pyrD) from Thermococcus kodakarensis (strain ATCC BAA-918 / JCM 12380 / KOD1) (Pyrococcus kodakaraensis (strain KOD1)).